The sequence spans 468 residues: UDP-N-acetylmuramate--L-alanine ligase (468 aa).

ATP is bound at residue G114 to T120.

Belongs to the MurCDEF family.

It localises to the cytoplasm. The enzyme catalyses UDP-N-acetyl-alpha-D-muramate + L-alanine + ATP = UDP-N-acetyl-alpha-D-muramoyl-L-alanine + ADP + phosphate + H(+). The protein operates within cell wall biogenesis; peptidoglycan biosynthesis. Its function is as follows. Cell wall formation. The polypeptide is UDP-N-acetylmuramate--L-alanine ligase (Methylocella silvestris (strain DSM 15510 / CIP 108128 / LMG 27833 / NCIMB 13906 / BL2)).